The following is a 293-amino-acid chain: 33 kDa chaperonin (293 aa).

2 cysteine pairs are disulfide-bonded: Cys238–Cys240 and Cys271–Cys274.

It belongs to the HSP33 family. Post-translationally, under oxidizing conditions two disulfide bonds are formed involving the reactive cysteines. Under reducing conditions zinc is bound to the reactive cysteines and the protein is inactive.

It is found in the cytoplasm. Its function is as follows. Redox regulated molecular chaperone. Protects both thermally unfolding and oxidatively damaged proteins from irreversible aggregation. Plays an important role in the bacterial defense system toward oxidative stress. In Staphylococcus aureus (strain USA300), this protein is 33 kDa chaperonin.